A 238-amino-acid chain; its full sequence is Ribonuclease PH (238 aa).

The disordered stretch occupies residues 64–86 (GMLPRSTGSRMDREAARGKQSGR). Phosphate-binding positions include R86 and 124 to 126 (GTR).

The protein belongs to the RNase PH family. In terms of assembly, homohexameric ring arranged as a trimer of dimers.

The catalysed reaction is tRNA(n+1) + phosphate = tRNA(n) + a ribonucleoside 5'-diphosphate. In terms of biological role, phosphorolytic 3'-5' exoribonuclease that plays an important role in tRNA 3'-end maturation. Removes nucleotide residues following the 3'-CCA terminus of tRNAs; can also add nucleotides to the ends of RNA molecules by using nucleoside diphosphates as substrates, but this may not be physiologically important. Probably plays a role in initiation of 16S rRNA degradation (leading to ribosome degradation) during starvation. The polypeptide is Ribonuclease PH (Methylobacillus flagellatus (strain ATCC 51484 / DSM 6875 / VKM B-1610 / KT)).